Here is a 224-residue protein sequence, read N- to C-terminus: Lipoprotein-releasing system ATP-binding protein LolD (224 aa).

The 219-residue stretch at L6–I224 folds into the ABC transporter domain. ATP is bound at residue G43–T50.

This sequence belongs to the ABC transporter superfamily. Lipoprotein translocase (TC 3.A.1.125) family. As to quaternary structure, the complex is composed of two ATP-binding proteins (LolD) and two transmembrane proteins (LolC and LolE).

The protein localises to the cell inner membrane. In terms of biological role, part of the ABC transporter complex LolCDE involved in the translocation of mature outer membrane-directed lipoproteins, from the inner membrane to the periplasmic chaperone, LolA. Responsible for the formation of the LolA-lipoprotein complex in an ATP-dependent manner. This Neorickettsia sennetsu (strain ATCC VR-367 / Miyayama) (Ehrlichia sennetsu) protein is Lipoprotein-releasing system ATP-binding protein LolD.